Consider the following 379-residue polypeptide: UDP-N-acetylglucosamine--N-acetylmuramyl-(pentapeptide) pyrophosphoryl-undecaprenol N-acetylglucosamine transferase (379 aa).

UDP-N-acetyl-alpha-D-glucosamine contacts are provided by residues 19–21 (TGG), Asn133, Arg174, Ser207, Ile261, and Gln306.

It belongs to the glycosyltransferase 28 family. MurG subfamily.

The protein localises to the cell inner membrane. The catalysed reaction is di-trans,octa-cis-undecaprenyl diphospho-N-acetyl-alpha-D-muramoyl-L-alanyl-D-glutamyl-meso-2,6-diaminopimeloyl-D-alanyl-D-alanine + UDP-N-acetyl-alpha-D-glucosamine = di-trans,octa-cis-undecaprenyl diphospho-[N-acetyl-alpha-D-glucosaminyl-(1-&gt;4)]-N-acetyl-alpha-D-muramoyl-L-alanyl-D-glutamyl-meso-2,6-diaminopimeloyl-D-alanyl-D-alanine + UDP + H(+). Its pathway is cell wall biogenesis; peptidoglycan biosynthesis. In terms of biological role, cell wall formation. Catalyzes the transfer of a GlcNAc subunit on undecaprenyl-pyrophosphoryl-MurNAc-pentapeptide (lipid intermediate I) to form undecaprenyl-pyrophosphoryl-MurNAc-(pentapeptide)GlcNAc (lipid intermediate II). The chain is UDP-N-acetylglucosamine--N-acetylmuramyl-(pentapeptide) pyrophosphoryl-undecaprenol N-acetylglucosamine transferase from Porphyromonas gingivalis (strain ATCC 33277 / DSM 20709 / CIP 103683 / JCM 12257 / NCTC 11834 / 2561).